Consider the following 448-residue polypeptide: MEVSSSETLPILWRTSPPSNDYENARCRVFNGRQPEHFPLAIVKANKVEHIVAAVKLAAELDACIAVRSGGHSLSCWTIRHGAILIDLEDYQHLSYDDEIHEVQASPSTLGADLLTFLAKKKRFFPVGHSGDIGLGGYLLQGGIGLNSRGYGYACEYITGLDIITADGEIKHCDKTENSDLYWAARGAGPEFPAIVIRFFLKTCPLLPVCKRSRYVWPAAMYGKVFKWLEELLNSLSEDVEIAVFGFVLPRLNQPGLVLHATAFGDSSENVREKLTPIIKNHPPGTFLAEDFVSTNFPEDYDLGKDTMPRGARYFTDSVFLKPGIDFVATCKGMFTELKHPRALAYWQPMKTNIDRILPDMAMSIHSHHYVSLLAIYEDPSEDQQQISWIIDRMKSLEPAILGTFIGDAHPVERPSNYWSEEAEERVITIGRKWDPSSRIRGIVLSDA.

In terms of domain architecture, FAD-binding PCMH-type spans 35–206 (PEHFPLAIVK…IRFFLKTCPL (172 aa)).

This sequence belongs to the oxygen-dependent FAD-linked oxidoreductase family. It depends on FAD as a cofactor.

Its pathway is secondary metabolite biosynthesis. Functionally, FAD-linked oxidoreductase; part of the gene cluster that mediates the biosynthesis of the indole diterpenes nodulisporic acids (NA). Nodulisporic acid A (NAA) and its chemically modified derivatives are of particular significance because of their highly potent insecticidal activity against blood-feeding arthropods and lack of observable adverse effects on mammals, in particular the tremogenicity associated with the paspaline-derived IDTs is not observed. The geranylgeranyl diphosphate (GGPP) synthase ggs1, localized outside of the cluster, is proposed to catalyze the first step in nodulisporic acid biosynthesis via conversion of farnesyl pyrophosphate and isopentyl pyrophosphate into geranylgeranyl pyrophosphate (GGPP). Condensation of indole-3-glycerol phosphate with GGPP by the prenyl transferase nodC then forms 3-geranylgeranylindole (3-GGI). Epoxidation by the FAD-dependent monooxygenase nodM leads to a single-epoxidized-GGI that is substrate of the terpene cyclase nodB for cyclization to yield emindole SB. The terminal methyl carbon, C28, of emindole SB is then oxidized by the cytochrome P450 monooxygenase nodW to produce nodulisporic acid F (NAF), the pentacyclic core of NAA. NAF is converted to nodulisporic acid E (NAE) via prenylation. This step is probably performed by one of the indole diterpene prenyltransferases nodD1 or nodD2. Several oxidation steps performed by the FAD-linked oxidoreductase nodO and one of the cytochrome P450 monooxygenase nodR, nodX or nodZ further convert NAE to nodulisporic acid D (NAD). NAD is substrate of cytochrome P450 monooxygenase nodJ to produce the precursor of nodulisporic acid C (NAC), converted to NAC by one of the indole diterpene prenyltransferases nodD1 or nodD2. The FAD-dependent monooxygenase nodY2 then oxidizes NAC to nodulisporic acid B (NAB). Finally NAB is converted to NAA by one of the cytochrome P450 monooxygenases nodR, nodX or nodZ. The polypeptide is FAD-linked oxidoreductase nodO (Hypoxylon pulicicidum).